Consider the following 804-residue polypeptide: Phenylalanine--tRNA ligase beta subunit (804 aa).

One can recognise a tRNA-binding domain in the interval 39-155 (EEGLKKLVVG…ADVKPGQDVY (117 aa)). Residues 408–483 (REPVVVKTTV…RIYGYDNLKS (76 aa)) enclose the B5 domain. Asp-461, Asp-467, Glu-470, and Glu-471 together coordinate Mg(2+). Residues 711 to 804 (PKFPAIERDL…LENDLDIKVR (94 aa)) form the FDX-ACB domain.

It belongs to the phenylalanyl-tRNA synthetase beta subunit family. Type 1 subfamily. Tetramer of two alpha and two beta subunits. Requires Mg(2+) as cofactor.

The protein localises to the cytoplasm. The enzyme catalyses tRNA(Phe) + L-phenylalanine + ATP = L-phenylalanyl-tRNA(Phe) + AMP + diphosphate + H(+). The chain is Phenylalanine--tRNA ligase beta subunit from Lactobacillus acidophilus (strain ATCC 700396 / NCK56 / N2 / NCFM).